Reading from the N-terminus, the 169-residue chain is Protein UL138 (169 aa).

A helical transmembrane segment spans residues 8-28; that stretch reads VGLPIIGVMLVLIVAILCYLA. The disordered stretch occupies residues 109–133; that stretch reads DRRAGSSSSSSVHVANQRNSVPPPD.

In terms of assembly, interacts with host TNFR1. Interacts with host MRP1. Interacts with host UAF1/WDR48. Interacts with host STING1.

The protein resides in the host Golgi apparatus membrane. Plays an important role in the establishment of latent viral infection. Modulates the expression of several host cell surface receptors such as TNFR1, CD36 or the MRP1 transporter during productive infection. For instance, associates with host MRP1 and induces its lysosomal degradation. Plays an inhibitory role in the host cGAS/STING/TBK1 pathway and upstream of IRF3 phosphorylation and NF-kappa-B leading to inhibition of interferon beta production during both lytic and latent infections. Also participates in the establishment of latency by sustaining an innate immune response through phosphorylation and activation of host STAT1. The chain is Protein UL138 (UL138) from Human cytomegalovirus (strain Merlin) (HHV-5).